A 468-amino-acid polypeptide reads, in one-letter code: ATP synthase subunit beta (468 aa).

150–157 contributes to the ATP binding site; sequence GGAGVGKT.

It belongs to the ATPase alpha/beta chains family. F-type ATPases have 2 components, CF(1) - the catalytic core - and CF(0) - the membrane proton channel. CF(1) has five subunits: alpha(3), beta(3), gamma(1), delta(1), epsilon(1). CF(0) has three main subunits: a(1), b(2) and c(9-12). The alpha and beta chains form an alternating ring which encloses part of the gamma chain. CF(1) is attached to CF(0) by a central stalk formed by the gamma and epsilon chains, while a peripheral stalk is formed by the delta and b chains.

It localises to the cell inner membrane. The catalysed reaction is ATP + H2O + 4 H(+)(in) = ADP + phosphate + 5 H(+)(out). Functionally, produces ATP from ADP in the presence of a proton gradient across the membrane. The catalytic sites are hosted primarily by the beta subunits. This is ATP synthase subunit beta from Acidovorax ebreus (strain TPSY) (Diaphorobacter sp. (strain TPSY)).